A 248-amino-acid polypeptide reads, in one-letter code: 23S rRNA (guanosine-2'-O-)-methyltransferase RlmB (248 aa).

Gly-200, Ile-220, and Leu-229 together coordinate S-adenosyl-L-methionine.

Belongs to the class IV-like SAM-binding methyltransferase superfamily. RNA methyltransferase TrmH family. RlmB subfamily.

Its subcellular location is the cytoplasm. It carries out the reaction guanosine(2251) in 23S rRNA + S-adenosyl-L-methionine = 2'-O-methylguanosine(2251) in 23S rRNA + S-adenosyl-L-homocysteine + H(+). Functionally, specifically methylates the ribose of guanosine 2251 in 23S rRNA. The polypeptide is 23S rRNA (guanosine-2'-O-)-methyltransferase RlmB (Acinetobacter baylyi (strain ATCC 33305 / BD413 / ADP1)).